A 697-amino-acid polypeptide reads, in one-letter code: Polyribonucleotide nucleotidyltransferase (697 aa).

Positions 488 and 494 each coordinate Mg(2+). Residues 555 to 614 (PTFEVITINPDKIRDVIGKGGATIRQITEETKAAIDIEDNGTVRVFGETKAAAKAAIAKI) form the KH domain. An S1 motif domain is found at 624–692 (GKIYDGKVIR…NRGRIKLTMK (69 aa)).

The protein belongs to the polyribonucleotide nucleotidyltransferase family. In terms of assembly, component of the RNA degradosome, which is a multiprotein complex involved in RNA processing and mRNA degradation. It depends on Mg(2+) as a cofactor.

Its subcellular location is the cytoplasm. It catalyses the reaction RNA(n+1) + phosphate = RNA(n) + a ribonucleoside 5'-diphosphate. In terms of biological role, involved in mRNA degradation. Catalyzes the phosphorolysis of single-stranded polyribonucleotides processively in the 3'- to 5'-direction. The chain is Polyribonucleotide nucleotidyltransferase from Acinetobacter baumannii (strain AB307-0294).